A 424-amino-acid polypeptide reads, in one-letter code: UDP-N-acetylglucosamine 1-carboxyvinyltransferase (424 aa).

Residue 22-23 (KN) participates in phosphoenolpyruvate binding. UDP-N-acetyl-alpha-D-glucosamine is bound at residue arginine 93. The active-site Proton donor is cysteine 117. Cysteine 117 carries the post-translational modification 2-(S-cysteinyl)pyruvic acid O-phosphothioketal. Residues 122–126 (RPVDL), 162–165 (KVSV), aspartate 307, and isoleucine 329 each bind UDP-N-acetyl-alpha-D-glucosamine.

Belongs to the EPSP synthase family. MurA subfamily.

Its subcellular location is the cytoplasm. It carries out the reaction phosphoenolpyruvate + UDP-N-acetyl-alpha-D-glucosamine = UDP-N-acetyl-3-O-(1-carboxyvinyl)-alpha-D-glucosamine + phosphate. It participates in cell wall biogenesis; peptidoglycan biosynthesis. Functionally, cell wall formation. Adds enolpyruvyl to UDP-N-acetylglucosamine. The chain is UDP-N-acetylglucosamine 1-carboxyvinyltransferase from Haemophilus influenzae (strain 86-028NP).